We begin with the raw amino-acid sequence, 110 residues long: MSWRGRSTYYWPRPRRYVQPPEMIGPMRPEQFSDEVEPATPEEGEPATQRQDPAAAQEGEDEGASAGQGPKPEAHSQEQGHPQTGCECEDGPDGQEMDPPNPEEVKTPEE.

Residues Met1–Glu110 form a disordered region. Composition is skewed to acidic residues over residues Phe32–Glu45 and Glu87–Glu96.

This sequence belongs to the GAGE family.

This chain is G antigen 2E (GAGE2E), found in Homo sapiens (Human).